A 529-amino-acid polypeptide reads, in one-letter code: Methionine--tRNA ligase (529 aa).

Residues 12–22 (YYVNALPHIGS) carry the 'HIGH' region motif. Residues Cys127, Cys130, Cys145, and His148 each coordinate Zn(2+). Positions 301–305 (KMGKS) match the 'KMSKS' region motif. Lys304 contacts ATP.

This sequence belongs to the class-I aminoacyl-tRNA synthetase family. MetG type 2A subfamily. As to quaternary structure, monomer. The cofactor is Zn(2+).

Its subcellular location is the cytoplasm. The catalysed reaction is tRNA(Met) + L-methionine + ATP = L-methionyl-tRNA(Met) + AMP + diphosphate. Is required not only for elongation of protein synthesis but also for the initiation of all mRNA translation through initiator tRNA(fMet) aminoacylation. This Thermosynechococcus vestitus (strain NIES-2133 / IAM M-273 / BP-1) protein is Methionine--tRNA ligase.